A 415-amino-acid polypeptide reads, in one-letter code: Gamma-glutamyl phosphate reductase (415 aa).

This sequence belongs to the gamma-glutamyl phosphate reductase family.

The protein localises to the cytoplasm. The enzyme catalyses L-glutamate 5-semialdehyde + phosphate + NADP(+) = L-glutamyl 5-phosphate + NADPH + H(+). It participates in amino-acid biosynthesis; L-proline biosynthesis; L-glutamate 5-semialdehyde from L-glutamate: step 2/2. Functionally, catalyzes the NADPH-dependent reduction of L-glutamate 5-phosphate into L-glutamate 5-semialdehyde and phosphate. The product spontaneously undergoes cyclization to form 1-pyrroline-5-carboxylate. This is Gamma-glutamyl phosphate reductase from Bacillus thuringiensis subsp. konkukian (strain 97-27).